The following is a 288-amino-acid chain: Shikimate dehydrogenase (NADP(+)) (288 aa).

Shikimate contacts are provided by residues 22 to 24 (SLS) and Thr69. Lys73 (proton acceptor) is an active-site residue. 2 residues coordinate shikimate: Asn94 and Asp110. NADP(+)-binding positions include 131-135 (GSGGA) and Leu228. Tyr230 is a binding site for shikimate. Gly251 is an NADP(+) binding site.

It belongs to the shikimate dehydrogenase family. In terms of assembly, homodimer.

It catalyses the reaction shikimate + NADP(+) = 3-dehydroshikimate + NADPH + H(+). The protein operates within metabolic intermediate biosynthesis; chorismate biosynthesis; chorismate from D-erythrose 4-phosphate and phosphoenolpyruvate: step 4/7. Involved in the biosynthesis of the chorismate, which leads to the biosynthesis of aromatic amino acids. Catalyzes the reversible NADPH linked reduction of 3-dehydroshikimate (DHSA) to yield shikimate (SA). This is Shikimate dehydrogenase (NADP(+)) from Synechococcus sp. (strain JA-2-3B'a(2-13)) (Cyanobacteria bacterium Yellowstone B-Prime).